The chain runs to 243 residues: MILLGVNIDHIATLRQARGERYPDPVDAAFAAERAGADSITVHLREDRRHIQDRDVVLLQQTCQTKINLEMAASEPMLTLAERWKPQDCCLVPEKRHELTTEGGLDVVGNRHRLADAVARLHDAGIRVSLFVDPDLEQISAAGAIGATVVEMHTGRYANAATQAQRNLELEQLYRAAHQASLNGLTVHAGHGLTYHNVQPIARLPDLKELNIGHAIIARAVMVGMESAVKEMKRLMREAVKTP.

Asn7 is a binding site for 3-amino-2-oxopropyl phosphate. 1-deoxy-D-xylulose 5-phosphate is bound at residue 9 to 10 (DH). Arg18 is a 3-amino-2-oxopropyl phosphate binding site. Residue His43 is the Proton acceptor of the active site. 2 residues coordinate 1-deoxy-D-xylulose 5-phosphate: Arg45 and His50. The active-site Proton acceptor is the Glu70. Thr100 serves as a coordination point for 1-deoxy-D-xylulose 5-phosphate. His191 acts as the Proton donor in catalysis. 3-amino-2-oxopropyl phosphate is bound by residues Gly192 and 213–214 (GH).

This sequence belongs to the PNP synthase family. Homooctamer; tetramer of dimers.

The protein resides in the cytoplasm. The enzyme catalyses 3-amino-2-oxopropyl phosphate + 1-deoxy-D-xylulose 5-phosphate = pyridoxine 5'-phosphate + phosphate + 2 H2O + H(+). It participates in cofactor biosynthesis; pyridoxine 5'-phosphate biosynthesis; pyridoxine 5'-phosphate from D-erythrose 4-phosphate: step 5/5. Catalyzes the complicated ring closure reaction between the two acyclic compounds 1-deoxy-D-xylulose-5-phosphate (DXP) and 3-amino-2-oxopropyl phosphate (1-amino-acetone-3-phosphate or AAP) to form pyridoxine 5'-phosphate (PNP) and inorganic phosphate. This Magnetococcus marinus (strain ATCC BAA-1437 / JCM 17883 / MC-1) protein is Pyridoxine 5'-phosphate synthase.